Reading from the N-terminus, the 73-residue chain is Small ribosomal subunit protein bS18 (73 aa).

The protein belongs to the bacterial ribosomal protein bS18 family. Part of the 30S ribosomal subunit. Forms a tight heterodimer with protein bS6.

Its function is as follows. Binds as a heterodimer with protein bS6 to the central domain of the 16S rRNA, where it helps stabilize the platform of the 30S subunit. The polypeptide is Small ribosomal subunit protein bS18 (Prochlorococcus marinus subsp. pastoris (strain CCMP1986 / NIES-2087 / MED4)).